A 156-amino-acid polypeptide reads, in one-letter code: Large ribosomal subunit protein uL15 (156 aa).

A disordered region spans residues 1-44 (MKLNELRDNPGASPKRTRVGRGPGSGKGKMGGRGIKGQKSRSGV). Positions 21-35 (RGPGSGKGKMGGRGI) are enriched in gly residues.

This sequence belongs to the universal ribosomal protein uL15 family. Part of the 50S ribosomal subunit.

Its function is as follows. Binds to the 23S rRNA. The polypeptide is Large ribosomal subunit protein uL15 (Ruegeria sp. (strain TM1040) (Silicibacter sp.)).